The primary structure comprises 100 residues: Replication restart protein PriB (100 aa).

An SSB domain is found at 1–99 (MGFNNLVSLA…LRIQNIKEYK (99 aa)).

This sequence belongs to the PriB family. Homodimer. Interacts with PriA and DnaT. Component of the replication restart primosome. Primosome assembly occurs via a 'hand-off' mechanism. PriA binds to replication forks, subsequently PriB then DnaT bind; DnaT then displaces ssDNA to generate the helicase loading substrate.

Functionally, involved in the restart of stalled replication forks, which reloads the replicative helicase on sites other than the origin of replication; the PriA-PriB pathway is the major replication restart pathway. During primosome assembly it facilitates complex formation between PriA and DnaT on DNA; stabilizes PriA on DNA. Stimulates the DNA unwinding activity of PriA helicase. The sequence is that of Replication restart protein PriB from Neisseria meningitidis serogroup C (strain 053442).